The sequence spans 274 residues: Glucosamine-6-phosphate deaminase (274 aa).

D72 (proton acceptor; for enolization step) is an active-site residue. The For ring-opening step role is filled by D141. Residue H143 is the Proton acceptor; for ring-opening step of the active site. The For ring-opening step role is filled by E148.

The protein belongs to the glucosamine/galactosamine-6-phosphate isomerase family. As to quaternary structure, homohexamer.

The protein resides in the cytoplasm. The catalysed reaction is alpha-D-glucosamine 6-phosphate + H2O = beta-D-fructose 6-phosphate + NH4(+). The protein operates within nucleotide-sugar biosynthesis; UDP-N-acetyl-alpha-D-glucosamine biosynthesis; alpha-D-glucosamine 6-phosphate from D-fructose 6-phosphate: step 1/1. Functionally, catalyzes the reversible conversion of alpha-D-glucosamine 6-phosphate (GlcN-6P) into beta-D-fructose 6-phosphate (Fru-6P) and ammonium ion, a regulatory reaction step in de novo uridine diphosphate-N-acetyl-alpha-D-glucosamine (UDP-GlcNAc) biosynthesis via hexosamine pathway. The chain is Glucosamine-6-phosphate deaminase from Drosophila pseudoobscura pseudoobscura (Fruit fly).